The primary structure comprises 236 residues: Adenosine 5'-phosphosulfate reductase (236 aa).

4 residues coordinate [4Fe-4S] cluster: cysteine 123, cysteine 124, cysteine 206, and cysteine 209. Cysteine 232 (nucleophile; cysteine thiosulfonate intermediate) is an active-site residue.

Belongs to the PAPS reductase family. CysH subfamily. The cofactor is [4Fe-4S] cluster.

It localises to the cytoplasm. The enzyme catalyses [thioredoxin]-disulfide + sulfite + AMP + 2 H(+) = adenosine 5'-phosphosulfate + [thioredoxin]-dithiol. It functions in the pathway sulfur metabolism; hydrogen sulfide biosynthesis; sulfite from sulfate. Functionally, catalyzes the formation of sulfite from adenosine 5'-phosphosulfate (APS) using thioredoxin as an electron donor. In Streptomyces coelicolor (strain ATCC BAA-471 / A3(2) / M145), this protein is Adenosine 5'-phosphosulfate reductase.